Here is a 417-residue protein sequence, read N- to C-terminus: MFANISISEFDPELAQAIASEDERQEAHIELIASENYCSPAVMEAQGSKLTNKYAEGYPGKRYYGGCEFVDVIEQMAIDRAKELFGADYANVQPHAGSQANSAVYLALLNPGDTVLGMSLAHGGHLTHGAKVSFSGKTYNAVQYGLNAETGEIDYEEVERLALEHKPRMIVAGFSAYSRVVDWQRFRDIADKVGAYLFVDMAHVAGLVAAGVYPNPVQIADVTTTTTHKTLRGPRSGLILAKANEEIEKKLQSAVFPGNQGGPLMHAIAAKAICFKEAMSDDFKAYQQQVVKNAQAMAEVFIARGYDVVSGGTDNHLFLLSLIKQDVTGKDADAWLGAAHITVNKNSVPNDPRSPFVTSGIRIGTPAVTTRGFGEAEVRELAGWIADVIDSKGDEKVIADVKAKVEAVCAKFPVYAK.

Residues Leu120 and 124–126 contribute to the (6S)-5,6,7,8-tetrahydrofolate site; that span reads GHL. Residue Lys229 is modified to N6-(pyridoxal phosphate)lysine. 354–356 provides a ligand contact to (6S)-5,6,7,8-tetrahydrofolate; the sequence is SPF.

It belongs to the SHMT family. In terms of assembly, homodimer. The cofactor is pyridoxal 5'-phosphate.

The protein localises to the cytoplasm. It catalyses the reaction (6R)-5,10-methylene-5,6,7,8-tetrahydrofolate + glycine + H2O = (6S)-5,6,7,8-tetrahydrofolate + L-serine. Its pathway is one-carbon metabolism; tetrahydrofolate interconversion. The protein operates within amino-acid biosynthesis; glycine biosynthesis; glycine from L-serine: step 1/1. Functionally, catalyzes the reversible interconversion of serine and glycine with tetrahydrofolate (THF) serving as the one-carbon carrier. This reaction serves as the major source of one-carbon groups required for the biosynthesis of purines, thymidylate, methionine, and other important biomolecules. Also exhibits THF-independent aldolase activity toward beta-hydroxyamino acids, producing glycine and aldehydes, via a retro-aldol mechanism. The sequence is that of Serine hydroxymethyltransferase from Acinetobacter baumannii (strain AB307-0294).